A 91-amino-acid chain; its full sequence is Small ribosomal subunit protein uS17 (91 aa).

Belongs to the universal ribosomal protein uS17 family. In terms of assembly, part of the 30S ribosomal subunit.

One of the primary rRNA binding proteins, it binds specifically to the 5'-end of 16S ribosomal RNA. In Thermobifida fusca (strain YX), this protein is Small ribosomal subunit protein uS17.